Consider the following 325-residue polypeptide: NADH-quinone oxidoreductase subunit H (325 aa).

8 consecutive transmembrane segments (helical) span residues 5–25 (LIIILIKSAVVILLLFTAAAY), 75–95 (FVYWLAPGISLFTALFIFVLI), 117–137 (VGVVFLLAFSSLAVYGVVLAG), 157–177 (ISYEIPMGLSLLTVVLSTGTL), 190–210 (WLIWTNPISFIIYFITSFAET), 240–260 (FFLGEYINILAVSAIATTLFF), 268–288 (DIPILWFGLKVAIFVFIFMWV), and 305–325 (WKVLIPIAILNLIITAYFTLV).

Belongs to the complex I subunit 1 family. In terms of assembly, NDH-1 is composed of 14 different subunits. Subunits NuoA, H, J, K, L, M, N constitute the membrane sector of the complex.

Its subcellular location is the cell inner membrane. It catalyses the reaction a quinone + NADH + 5 H(+)(in) = a quinol + NAD(+) + 4 H(+)(out). In terms of biological role, NDH-1 shuttles electrons from NADH, via FMN and iron-sulfur (Fe-S) centers, to quinones in the respiratory chain. The immediate electron acceptor for the enzyme in this species is believed to be ubiquinone. Couples the redox reaction to proton translocation (for every two electrons transferred, four hydrogen ions are translocated across the cytoplasmic membrane), and thus conserves the redox energy in a proton gradient. This subunit may bind ubiquinone. This chain is NADH-quinone oxidoreductase subunit H, found in Protochlamydia amoebophila (strain UWE25).